Consider the following 412-residue polypeptide: MIEAPPFDRSLGMLYYATDTYPSGGVIKAKPEDFLVEEVLYDGTVVALEGVSIEPRVGGWTWIHVVKRNVDTVKLVLRLAKALGLRSRDISIGGIKDTRAVTSQIVSVRGNVADLPKIPNVQFLGLWPMDKPIAPSLIYGNRFTIVLRNVERRECAEAALAALGKAALPNYYGYQRFGTIRPVSHLLGKALLRKDAEGFFHVMFCKIFPYESEAAKKARELACRGEYQKALEAFPRGFVEERALLRRLVRGSDLWNAAMAIPLQILRIYIEAAQSHLFNLLLSKRMELGPLDRPVEGDLVEVNGQVTYYVEDLGGEVVVPVVGAGVRMPRGRVLEAFVKVLKEEGLEPSAFLQMPRGLRAYGSYRRARLQARDLAYSLGDDLVLRFVLPRGGYATVLLREVVKPTEPYRHGF.

The Nucleophile role is filled by Asp-97. In terms of domain architecture, TRUD spans 167–370 (ALPNYYGYQR…YGSYRRARLQ (204 aa)).

It belongs to the pseudouridine synthase TruD family.

It carries out the reaction uridine(13) in tRNA = pseudouridine(13) in tRNA. Functionally, could be responsible for synthesis of pseudouridine from uracil-13 in transfer RNAs. The chain is Probable tRNA pseudouridine synthase D from Pyrobaculum neutrophilum (strain DSM 2338 / JCM 9278 / NBRC 100436 / V24Sta) (Thermoproteus neutrophilus).